A 257-amino-acid polypeptide reads, in one-letter code: Glutamate racemase (257 aa).

Substrate is bound by residues 12–13 (DS) and 44–45 (YG). Cysteine 75 acts as the Proton donor/acceptor in catalysis. Residue 76 to 77 (NT) coordinates substrate. The active-site Proton donor/acceptor is the cysteine 176. 177–178 (TH) serves as a coordination point for substrate.

It belongs to the aspartate/glutamate racemases family.

It carries out the reaction L-glutamate = D-glutamate. Its pathway is cell wall biogenesis; peptidoglycan biosynthesis. Provides the (R)-glutamate required for cell wall biosynthesis. This is Glutamate racemase from Thermus thermophilus (strain ATCC BAA-163 / DSM 7039 / HB27).